The following is a 532-amino-acid chain: MVLTPVSPVVLVILDGWGYREELVGNAIAAAHTPVMDSLWQAYPHTLVYTSGKAVGLPKGQMGNSEVGHLNLGAGRIVPQELVRISDAAEDGSLAANPALVQVYEGVKQRGTKLHLVGLCSDGGVHSHLDHLLALLDMAKSLGVTQVCVHAITDGRDTLPTEGKTFIQRLQDHLDRLEMGQIVTLSGRYYAMDRDRRWDRVERAYRVMTSDENIVDTPAWKILANGYAENITDEFLPPVRIAPGAIAAGDGVVFFNFRPDRARQLTQAFVDPNFKGFERSLISPLDFVTFTQYDASLSCAIAFPPQNLSNILGEVIAAKGLKQLRVAETEKYAHVTYFFNGGIEDPLPGEDRILVPSPMVATYDQAPAMSAAQVTQEVIAAVEKGVYSMVVVNYANPDMVGHTGQMKATIQALEAVDRCVGQLLQSVLQMGGTLLITADHGNAECMVDEQGNPWTAHTTNPVPFILVEGEGVKIPGHGTDVALRDDGCLADIAPTILEILRLPQPAEMTGRSLIQPLEVDLRPNRTPVRVRL.

Mn(2+)-binding residues include Asp15 and Ser65. The active-site Phosphoserine intermediate is the Ser65. Substrate-binding positions include His126, 156-157 (RD), Arg188, Arg194, 258-261 (RPDR), and Lys331. Mn(2+) contacts are provided by Asp398, His402, Asp439, His440, and His457.

This sequence belongs to the BPG-independent phosphoglycerate mutase family. Monomer. Mn(2+) is required as a cofactor.

It carries out the reaction (2R)-2-phosphoglycerate = (2R)-3-phosphoglycerate. The protein operates within carbohydrate degradation; glycolysis; pyruvate from D-glyceraldehyde 3-phosphate: step 3/5. Its function is as follows. Catalyzes the interconversion of 2-phosphoglycerate and 3-phosphoglycerate. The chain is 2,3-bisphosphoglycerate-independent phosphoglycerate mutase from Cyanothece sp. (strain PCC 7425 / ATCC 29141).